A 331-amino-acid polypeptide reads, in one-letter code: Adenosine deaminase (331 aa).

Residues His12 and His14 each coordinate Zn(2+). His14, Asp16, and Gly170 together coordinate substrate. Position 197 (His197) interacts with Zn(2+). Glu200 serves as the catalytic Proton donor. Asp278 contributes to the Zn(2+) binding site. Asp279 contributes to the substrate binding site.

It belongs to the metallo-dependent hydrolases superfamily. Adenosine and AMP deaminases family. Adenosine deaminase subfamily. It depends on Zn(2+) as a cofactor.

The catalysed reaction is adenosine + H2O + H(+) = inosine + NH4(+). The enzyme catalyses 2'-deoxyadenosine + H2O + H(+) = 2'-deoxyinosine + NH4(+). Functionally, catalyzes the hydrolytic deamination of adenosine and 2-deoxyadenosine. In Shewanella sp. (strain MR-7), this protein is Adenosine deaminase.